Here is a 306-residue protein sequence, read N- to C-terminus: UDP-N-acetylenolpyruvoylglucosamine reductase (306 aa).

The 167-residue stretch at 28–194 (KIGNISKLFL…LKTELNLKKE (167 aa)) folds into the FAD-binding PCMH-type domain. Residue serine 223 is the Proton donor of the active site. Residue glutamate 295 is part of the active site.

Belongs to the MurB family. FAD is required as a cofactor.

It is found in the cytoplasm. The enzyme catalyses UDP-N-acetyl-alpha-D-muramate + NADP(+) = UDP-N-acetyl-3-O-(1-carboxyvinyl)-alpha-D-glucosamine + NADPH + H(+). It functions in the pathway cell wall biogenesis; peptidoglycan biosynthesis. Its function is as follows. Cell wall formation. In Borrelia garinii subsp. bavariensis (strain ATCC BAA-2496 / DSM 23469 / PBi) (Borreliella bavariensis), this protein is UDP-N-acetylenolpyruvoylglucosamine reductase.